We begin with the raw amino-acid sequence, 170 residues long: MGNEASYPAEICSHFDEDEIKRLRKRFKKLDLDSSSALSVKEFTSMPELQENPLVQRVIDVFDTDGDGQVDFREFILGTSQFSVRGDEEQKLRFAFSIYDMDKDGYISNGELFQVLKMMVGDNLKDWQLQQLVDKTIILLDKDGDGKISFQEFSAVVRSLEIHKHLVTIV.

The N-myristoyl glycine moiety is linked to residue glycine 2. EF-hand domains follow at residues 18-46 (DEIK…FTSM), 50-85 (QENP…FSVR), 87-122 (DEEQ…MVGD), and 128-163 (QLQQ…LEIH). Residues aspartate 63, aspartate 65, aspartate 67, glutamine 69, glutamate 74, aspartate 100, aspartate 102, aspartate 104, tyrosine 106, and glutamate 111 each contribute to the Ca(2+) site. Residues 131–136 (QLVDKT) are calcineurin A binding. Residues aspartate 141, aspartate 143, aspartate 145, lysine 147, and glutamate 152 each contribute to the Ca(2+) site.

Belongs to the calcineurin regulatory subunit family. As to quaternary structure, forms a complex composed of a calmodulin-dependent catalytic subunit (also known as calcineurin A) and a regulatory Ca(2+)-binding subunit (also known as calcineurin B). There are three catalytic subunits, each encoded by a separate gene (PPP3CA, PPP3CB, and PPP3CC) and two regulatory subunits which are also encoded by separate genes (PPP3R1 and PPP3R2). Interacts with SPATA33 (via PQIIIT motif).

It is found in the mitochondrion. Its function is as follows. Regulatory subunit of calcineurin, a calcium-dependent, calmodulin stimulated protein phosphatase. Confers calcium sensitivity. This Bos taurus (Bovine) protein is Calcineurin subunit B type 2 (PPP3R2).